The sequence spans 313 residues: Small ribosomal subunit protein uS2 (313 aa).

A disordered region spans residues 281 to 301 (AAPAAPAVEPAPEAAQEATAE).

This sequence belongs to the universal ribosomal protein uS2 family.

The sequence is that of Small ribosomal subunit protein uS2 from Caulobacter sp. (strain K31).